We begin with the raw amino-acid sequence, 174 residues long: MASRGVNKVILVGNLGQDPEVRYMPSGGAVANFTLATSESWRDKQTGEMKEQTEWHRVVLFGKLAEVAGEYLRKGSQVYIEGQLRTRKWTDQSGQDKYTTEVVVNVGGTMQMLGGRQGGGAPAGGGQQQGGWGQPQQPQGGNQFSGGAQSRPQQQAPAAPSNEPPMDFDDDIPF.

Positions 6-111 constitute an SSB domain; the sequence is VNKVILVGNL…VVVNVGGTMQ (106 aa). The DNA-binding element occupies 55-61; that stretch reads WHRVVLF. The interval 110–174 is disordered; it reads MQMLGGRQGG…PMDFDDDIPF (65 aa). A compositionally biased stretch (gly residues) spans 115–133; it reads GRQGGGAPAGGGQQQGGWG. Low complexity predominate over residues 134-160; it reads QPQQPQGGNQFSGGAQSRPQQQAPAAP. The Important for interaction with partner proteins motif lies at 169 to 174; the sequence is DDDIPF.

In terms of assembly, homotetramer. Binds PriA via its C-terminus.

Plays an important role in DNA replication, recombination and repair. Binds to ssDNA and to an array of partner proteins to recruit them to their sites of action during DNA metabolism. Stimulates the ATPase activity of PriA. One tetramer binds to 26 nucleotides (nt) of ssDNA, a 55 nt piece of ssDNA probably binds 2 tetramers. The chain is Single-stranded DNA-binding protein 1 from Klebsiella pneumoniae subsp. pneumoniae (strain ATCC 700721 / MGH 78578).